Here is a 413-residue protein sequence, read N- to C-terminus: Multifunctional CCA protein (413 aa).

G8 and R11 together coordinate ATP. Residues G8 and R11 each coordinate CTP. D21 and D23 together coordinate Mg(2+). Residues R91, R137, and R140 each contribute to the ATP site. Positions 91, 137, and 140 each coordinate CTP. An HD domain is found at 228–329; the sequence is TGVHTLMTLS…VKLFDAIDAW (102 aa).

It belongs to the tRNA nucleotidyltransferase/poly(A) polymerase family. Bacterial CCA-adding enzyme type 1 subfamily. In terms of assembly, monomer. Can also form homodimers and oligomers. Mg(2+) serves as cofactor. It depends on Ni(2+) as a cofactor.

The catalysed reaction is a tRNA precursor + 2 CTP + ATP = a tRNA with a 3' CCA end + 3 diphosphate. It catalyses the reaction a tRNA with a 3' CCA end + 2 CTP + ATP = a tRNA with a 3' CCACCA end + 3 diphosphate. Catalyzes the addition and repair of the essential 3'-terminal CCA sequence in tRNAs without using a nucleic acid template. Adds these three nucleotides in the order of C, C, and A to the tRNA nucleotide-73, using CTP and ATP as substrates and producing inorganic pyrophosphate. tRNA 3'-terminal CCA addition is required both for tRNA processing and repair. Also involved in tRNA surveillance by mediating tandem CCA addition to generate a CCACCA at the 3' terminus of unstable tRNAs. While stable tRNAs receive only 3'-terminal CCA, unstable tRNAs are marked with CCACCA and rapidly degraded. This Salmonella typhimurium (strain LT2 / SGSC1412 / ATCC 700720) protein is Multifunctional CCA protein.